Here is a 141-residue protein sequence, read N- to C-terminus: MAKKVTGVVKLQLPAGKATPAPPVGPALGGYGINIMAFVKEYNEKTASQAGSIIPVEVTIYSDRSFTITLKTPPAADLLRKAAGIEKGSGTPNRKIAGTITAKQLRQVAEQKMSDLNAQSIEAAEKIIAGTARSMGIKIVE.

Belongs to the universal ribosomal protein uL11 family. As to quaternary structure, part of the ribosomal stalk of the 50S ribosomal subunit. Interacts with L10 and the large rRNA to form the base of the stalk. L10 forms an elongated spine to which L12 dimers bind in a sequential fashion forming a multimeric L10(L12)X complex. Post-translationally, one or more lysine residues are methylated.

In terms of biological role, forms part of the ribosomal stalk which helps the ribosome interact with GTP-bound translation factors. This Roseiflexus castenholzii (strain DSM 13941 / HLO8) protein is Large ribosomal subunit protein uL11.